We begin with the raw amino-acid sequence, 426 residues long: tRNA modification GTPase MnmE (426 aa).

(6S)-5-formyl-5,6,7,8-tetrahydrofolate-binding residues include Arg-20, Glu-77, and Met-117. Residues Gly-213–Ser-350 form the TrmE-type G domain. A K(+)-binding site is contributed by Asn-223. GTP is bound by residues Asn-223–Thr-228, Ser-242–Thr-248, and Asp-267–Gly-270. Ser-227 contributes to the Mg(2+) binding site. Residues Ser-242, Val-244, and Thr-247 each coordinate K(+). Mg(2+) is bound at residue Thr-248. Lys-426 contacts (6S)-5-formyl-5,6,7,8-tetrahydrofolate.

Belongs to the TRAFAC class TrmE-Era-EngA-EngB-Septin-like GTPase superfamily. TrmE GTPase family. In terms of assembly, homodimer. Heterotetramer of two MnmE and two MnmG subunits. K(+) is required as a cofactor.

It is found in the cytoplasm. Exhibits a very high intrinsic GTPase hydrolysis rate. Involved in the addition of a carboxymethylaminomethyl (cmnm) group at the wobble position (U34) of certain tRNAs, forming tRNA-cmnm(5)s(2)U34. In Jannaschia sp. (strain CCS1), this protein is tRNA modification GTPase MnmE.